Here is a 121-residue protein sequence, read N- to C-terminus: Nitrogenase-stabilizing/protective protein NifW (121 aa).

This sequence belongs to the NifW family. Homotrimer; associates with NifD.

In terms of biological role, may protect the nitrogenase Fe-Mo protein from oxidative damage. The protein is Nitrogenase-stabilizing/protective protein NifW of Leptothrix cholodnii (strain ATCC 51168 / LMG 8142 / SP-6) (Leptothrix discophora (strain SP-6)).